Consider the following 375-residue polypeptide: MQVIVALAALGSLAAPALGFSIPRGVPVSQSMIDVKLSSTGNSMVKATITNNGNRALNLLKFHTIMDSNPTRKVSIESEDGKEIQFTGMMPTYKEKDLKPSYFISLPPKGTVEHSFDIARTHDLSRGGKFTLKAEGMVPIAEENGTEITGAAKYHSNELHMTIDGEKAASVENAFGIVKRGPLTRINKRTSIDMQSCGNSQELQALTAALKASAQLSSMSAQAVSQNQDKYMEYFKDPQYMQTVQSRFQAVAQESSSTTGGGTTYHCSDTMGGCEEGVLAYTLPSQNEVFNCPIYYSDLPPLSNECHAQDQATTTLHELTHNPAVQEPFCEDNGYGYERATALSAEKAVQNADSYALFANGKLNLITLMLIIDPD.

Residues 1–19 (MQVIVALAALGSLAAPALG) form the signal peptide. Positions 20–189 (FSIPRGVPVS…RGPLTRINKR (170 aa)) are excised as a propeptide. Disulfide bonds link Cys-197/Cys-267 and Cys-274/Cys-292. Residue His-317 participates in Zn(2+) binding. Glu-318 is an active-site residue. Positions 321 and 332 each coordinate Zn(2+).

It belongs to the peptidase M35 family. Zn(2+) is required as a cofactor.

The protein localises to the secreted. It carries out the reaction Preferential cleavage of bonds with hydrophobic residues in P1'. Also 3-Asn-|-Gln-4 and 8-Gly-|-Ser-9 bonds in insulin B chain.. Functionally, probable secreted metalloprotease that shows high activities on basic nuclear substrates such as histone and protamine. May be involved in virulence. This is Probable neutral protease 2 homolog ARB_05817 from Arthroderma benhamiae (strain ATCC MYA-4681 / CBS 112371) (Trichophyton mentagrophytes).